The chain runs to 314 residues: MSFPAPKPKAPELPQKLQHKLECNQGAVRAVRFNVDGNYCMTCGSDKTLKLWNPHKGTLLKTYSGHGYEVLDTAGSYDNSQMCSCSSDKTVILWDVAQGQVVRKFRGHAGKVNCVQFNEEATVIMSGSIDSSIRCWDCRSRRPEAIQILDEAKDGISSIKISDHEILAGSVDGNLRRYDLRKGEMCADYLGSPITCVSFSQDSQCLLASSLDSTLRLLDKDTGELLGEYTGHQNHSYKLDSCLSEKDTHVLSCSEDGTVCFWDLVEGSLVLKLPVGKAAVQSLSFHPSECCLLTASEGGVQLWRGASYEEEGGS.

WD repeat units lie at residues Cys23–Thr62, Gly65–Lys104, Gly107–Ile146, Glu151–Asp188, Tyr189–Glu228, Gly231–Lys272, and Val275–Gly313.

Belongs to the WD repeat MORG1 family.

Its subcellular location is the cytoplasm. In terms of biological role, molecular scaffold protein for various multimeric protein complexes. Acts as a module in the assembly of a multicomponent scaffold for the ERK pathway, linking ERK responses to specific agonists. Also involved in response to hypoxia by acting as a negative regulator of HIF1A/HIF-1-alpha. This is WD repeat domain-containing protein 83 (wdr83) from Xenopus tropicalis (Western clawed frog).